The following is a 108-amino-acid chain: Thiosulfate sulfurtransferase GlpE (108 aa).

The Rhodanese domain occupies 17-105 (QEKEAVLVDI…WQRQFPAEVA (89 aa)). The active-site Cysteine persulfide intermediate is the Cys-65.

It belongs to the GlpE family.

The protein localises to the cytoplasm. It carries out the reaction thiosulfate + hydrogen cyanide = thiocyanate + sulfite + 2 H(+). It catalyses the reaction thiosulfate + [thioredoxin]-dithiol = [thioredoxin]-disulfide + hydrogen sulfide + sulfite + 2 H(+). In terms of biological role, transferase that catalyzes the transfer of sulfur from thiosulfate to thiophilic acceptors such as cyanide or dithiols. May function in a CysM-independent thiosulfate assimilation pathway by catalyzing the conversion of thiosulfate to sulfite, which can then be used for L-cysteine biosynthesis. The chain is Thiosulfate sulfurtransferase GlpE from Shigella dysenteriae serotype 1 (strain Sd197).